Reading from the N-terminus, the 207-residue chain is Large ribosomal subunit protein uL4 (207 aa).

The segment at 44–76 (RRQGTQSTKTKSEVRGGGKKPWRQKGTGRARQG) is disordered. A compositionally biased stretch (basic residues) spans 60 to 71 (GGKKPWRQKGTG).

The protein belongs to the universal ribosomal protein uL4 family. Part of the 50S ribosomal subunit.

Its function is as follows. One of the primary rRNA binding proteins, this protein initially binds near the 5'-end of the 23S rRNA. It is important during the early stages of 50S assembly. It makes multiple contacts with different domains of the 23S rRNA in the assembled 50S subunit and ribosome. Forms part of the polypeptide exit tunnel. The chain is Large ribosomal subunit protein uL4 from Ruminiclostridium cellulolyticum (strain ATCC 35319 / DSM 5812 / JCM 6584 / H10) (Clostridium cellulolyticum).